We begin with the raw amino-acid sequence, 427 residues long: MMPSESGAESLEQPAAQVGTGAASAVATAGAAGGGPDPEASSASLGRHQSRLSWPQVKRLDALLKEPIPIHGRGNFPTLSVQPQQIVQVVRSSLEEHGLRVHSVRLHGSAASHVLHPESGLGYKDLDLVFQMDLRSEVSFQLTKAVVLACLLDFLPAGVSRAKITPLTLKEAYVQKLVKVCTDLDRWSLISLSNKSGKNVELKFVDSVRRQFEFSIDSFQIILDSLLLFGQCSSTPMSEAFHPTVTGESLYGDFAEALEHLQHRVIATRSPEEIRGGGLLKYCHLLVRGFRPRPSTDVRALQRYMCSRFFIDFPDLVEQRRILERYLEAHFGGAEAARRYACLVTLHQVVNESTVCLMSHERRQTLDLIAMLALQALAEQGPAAMAALAWRRPGSDGVVPATVNYYVTPMQPLLPRAHSYPTWLPCN.

The tract at residues 1–49 (MMPSESGAESLEQPAAQVGTGAASAVATAGAAGGGPDPEASSASLGRHQ) is disordered. Low complexity predominate over residues 15 to 30 (AAQVGTGAASAVATAG).

It belongs to the TENT family.

The protein resides in the cytoplasm. It is found in the nucleus. It carries out the reaction RNA(n) + ATP = RNA(n)-3'-adenine ribonucleotide + diphosphate. Its function is as follows. Catalyzes the transfer of one adenosine molecule from an ATP to an mRNA poly(A) tail bearing a 3'-OH terminal group in an ATP hydrolysis-dependent manner. May be involved in maintaining the translation efficiency of at least some genes through preventing degradation of their mRNAs. Prefers RNA molecules that are adenosine-rich close to 3'-end. In addition, may inhibit cell proliferation and cell cycle progression through ubiquitination of beta-catenin/CTNNB1. In Mus musculus (Mouse), this protein is Terminal nucleotidyltransferase 5B.